The sequence spans 97 residues: MRHATSPIVFCFLIFLVMNHVKGQAKKKRCPIGLHTYGKCGTDRAKFCFSEIESKLSFSKQVLNTISSCRCDDDRQGNKDLYWCQCDRREGRPCPAN.

An N-terminal signal peptide occupies residues 1-23 (MRHATSPIVFCFLIFLVMNHVKG). 4 disulfides stabilise this stretch: Cys-30/Cys-94, Cys-40/Cys-71, Cys-48/Cys-84, and Cys-69/Cys-86.

This sequence belongs to the DEFL family.

It is found in the secreted. The protein is Putative defensin-like protein 237 (SCRL21) of Arabidopsis thaliana (Mouse-ear cress).